Reading from the N-terminus, the 315-residue chain is tRNA wybutosine-synthesizing protein 5 (315 aa).

The JmjC domain occupies 102–267; the sequence is DEKYYLRSLG…YDTTDTYGNK (166 aa). Position 106 (Tyr-106) interacts with 2-oxoglutarate. Residues His-160 and Asp-162 each coordinate Fe cation. 2-oxoglutarate-binding residues include Asn-166 and Lys-175. His-235 serves as a coordination point for Fe cation.

Belongs to the TYW5 family. In terms of assembly, homodimer. It depends on Fe(2+) as a cofactor.

It carries out the reaction 7-[(3S)-3-amino-3-carboxypropyl]wyosine(37) in tRNA(Phe) + 2-oxoglutarate + O2 = 7-(2-hydroxy-3-amino-3-carboxypropyl)wyosine(37) in tRNA(Phe) + succinate + CO2. Its pathway is tRNA modification; wybutosine-tRNA(Phe) biosynthesis. TRNA hydroxylase that acts as a component of the wybutosine biosynthesis pathway. Wybutosine is a hyper modified guanosine with a tricyclic base found at the 3'-position adjacent to the anticodon of eukaryotic phenylalanine tRNA. Catalyzes the hydroxylation of 7-(a-amino-a-carboxypropyl)wyosine (yW-72) into undermodified hydroxywybutosine (OHyW*). OHyW* being further transformed into hydroxywybutosine (OHyW) by LCMT2/TYW4. OHyW is a derivative of wybutosine found in higher eukaryotes. This chain is tRNA wybutosine-synthesizing protein 5 (Tyw5), found in Mus musculus (Mouse).